Reading from the N-terminus, the 238-residue chain is Small ribosomal subunit protein eS4 (238 aa).

Positions 38–101 (LPLALIIRDV…GEVYRVVPDA (64 aa)) constitute an S4 RNA-binding domain.

The protein belongs to the eukaryotic ribosomal protein eS4 family.

This is Small ribosomal subunit protein eS4 from Pyrobaculum aerophilum (strain ATCC 51768 / DSM 7523 / JCM 9630 / CIP 104966 / NBRC 100827 / IM2).